Consider the following 368-residue polypeptide: uncharacterized protein (368 aa).

Disordered regions lie at residues 1–22 (MEKS…LPEK) and 282–317 (KHLG…EPPA). A compositionally biased stretch (basic and acidic residues) spans 293 to 311 (KRVEKMKKAYKESKEEKAS).

This is an uncharacterized protein from Mus musculus (Mouse).